The primary structure comprises 138 residues: Large ribosomal subunit protein uL16 (138 aa).

Residues 1–13 show a composition bias toward basic residues; sequence MLQPARRKYRKEQ. Positions 1 to 22 are disordered; sequence MLQPARRKYRKEQKGRNTGVAT.

This sequence belongs to the universal ribosomal protein uL16 family. As to quaternary structure, part of the 50S ribosomal subunit.

Functionally, binds 23S rRNA and is also seen to make contacts with the A and possibly P site tRNAs. The chain is Large ribosomal subunit protein uL16 from Polaromonas naphthalenivorans (strain CJ2).